A 345-amino-acid polypeptide reads, in one-letter code: N-malonyltransferase FDB2 (345 aa).

Cysteine 110 serves as the catalytic Acyl-thioester intermediate. Catalysis depends on histidine 158, which acts as the Proton acceptor. Residue aspartate 173 is part of the active site.

Belongs to the arylamine N-acetyltransferase family.

It participates in xenobiotic degradation. In terms of biological role, N-malonyltransferase; part of the Fusarium detoxification of benzoxazolinone cluster 2 (FDB2) involved in the degradation of benzoxazolinones produced by the host plant. Maize, wheat, and rye produce the 2 benzoxazinone phytoanticipins 2,4-dihy-droxy-7-methoxy-1,4-benzoxazin-3-one (DIMBOA) and 2,4-dihydroxy-1,4-benzoxazin-3-one (DIBOA) that, due to their inherent instability once released, spontaneously degrade to the more stable corresponding benzoxazolinones, 6-methoxy-2-benzoxazolinone (MBOA) and 2-benzoxazolinone (BOA), respectively. The first step in the detoxification of benzoxazolinones involves the hydrolysis of the cyclic ester bond of benzoxazolinones by the FDB1 cluster gamma-lactamase MBL1 to aminophenols. MBL1 is able to convert BOA into 2-aminophenol (2-AP), as well as MBOA into 5-methoxy-2-aminophenol (2-AMP). The FDB2 cluster N-malonyltransferase FDB2/NAT1 then metabolizes aminophenols via N-malonylation to non-toxic malonamic acids. FDB2/NAT1 converts 2-AP into N-(2-hydroxyphenyl) malonamic acid (HPMA) and 2-AMP into N-(2-hydroxy-4-methoxyphenyl) malonamic acid (HMPMA). The duplicated dienlactone hydrolases DLH1 and DLH2 may provide redundant function for hydrolyzing the lactone moiety in the BOA molecule. The roles of the amidases an other enzymes encoded by the 2 FDB clusters have not been identified so far. The chain is N-malonyltransferase FDB2 from Gibberella moniliformis (strain M3125 / FGSC 7600) (Maize ear and stalk rot fungus).